Here is a 436-residue protein sequence, read N- to C-terminus: Glutamyl-tRNA reductase (436 aa).

Substrate contacts are provided by residues 49 to 52 (TCNR), Ser-118, 123 to 125 (EPQ), and Gln-129. The active-site Nucleophile is Cys-50. 203 to 208 (GAGETI) serves as a coordination point for NADP(+).

This sequence belongs to the glutamyl-tRNA reductase family. As to quaternary structure, homodimer.

It carries out the reaction (S)-4-amino-5-oxopentanoate + tRNA(Glu) + NADP(+) = L-glutamyl-tRNA(Glu) + NADPH + H(+). The protein operates within porphyrin-containing compound metabolism; protoporphyrin-IX biosynthesis; 5-aminolevulinate from L-glutamyl-tRNA(Glu): step 1/2. Its function is as follows. Catalyzes the NADPH-dependent reduction of glutamyl-tRNA(Glu) to glutamate 1-semialdehyde (GSA). This chain is Glutamyl-tRNA reductase, found in Actinobacillus pleuropneumoniae serotype 7 (strain AP76).